The primary structure comprises 122 residues: Protein preY, mitochondrial (122 aa).

Residues 1 to 40 (MLAVRAWGRTYNTLVQRKLNAACPTGALPAVTLRPLHCSL) constitute a mitochondrion transit peptide. Residues 56-102 (DPTLLQFLVCPLSRKSLRYEESTNELINDELGIAYPIVDGIPNMIPQ) enclose the TRM112 domain.

It belongs to the PREY family.

Its subcellular location is the mitochondrion. In terms of biological role, in mitochondria, S-adenosylmethionine-dependent methyltransferase chaperone that supports both coenzyme Q biosynthesis and NADH:ubiquinone oxidoreductase complex (complex I, MT-ND1) assembly. This chain is Protein preY, mitochondrial (pyurf), found in Xenopus tropicalis (Western clawed frog).